The chain runs to 894 residues: Phosphoenolpyruvate carboxylase (894 aa).

Catalysis depends on residues histidine 143 and lysine 556.

The protein belongs to the PEPCase type 1 family. Requires Mg(2+) as cofactor.

It carries out the reaction oxaloacetate + phosphate = phosphoenolpyruvate + hydrogencarbonate. In terms of biological role, forms oxaloacetate, a four-carbon dicarboxylic acid source for the tricarboxylic acid cycle. The sequence is that of Phosphoenolpyruvate carboxylase from Acinetobacter baumannii (strain ATCC 17978 / DSM 105126 / CIP 53.77 / LMG 1025 / NCDC KC755 / 5377).